We begin with the raw amino-acid sequence, 170 residues long: Small ribosomal subunit protein mS41 (170 aa).

The N-terminal 20 residues, 1–20 (MFRTLLSSTVRSIQLKPVTS), are a transit peptide targeting the mitochondrion.

It belongs to the mitochondrion-specific ribosomal protein mS41 family. In terms of assembly, component of the mitochondrial small ribosomal subunit (mt-SSU).

It is found in the mitochondrion. Its function is as follows. Component of the mitochondrial ribosome (mitoribosome), a dedicated translation machinery responsible for the synthesis of mitochondrial genome-encoded proteins, including at least some of the essential transmembrane subunits of the mitochondrial respiratory chain. The mitoribosomes are attached to the mitochondrial inner membrane and translation products are cotranslationally integrated into the membrane. mS41 is involved in telomere length regulation. The protein is Small ribosomal subunit protein mS41 (FYV4) of Candida albicans (strain SC5314 / ATCC MYA-2876) (Yeast).